Here is a 198-residue protein sequence, read N- to C-terminus: uncharacterized protein (198 aa).

This is an uncharacterized protein from Bacillus subtilis (strain 168).